Here is a 215-residue protein sequence, read N- to C-terminus: Probable GTP-binding protein EngB (215 aa).

Residues 26–200 (EGIEVAFAGR…RAKLDEWFAP (175 aa)) form the EngB-type G domain. GTP is bound by residues 34–41 (GRSNAGKS), 61–65 (GRTQL), 79–82 (DLPG), 146–149 (TKAD), and 179–181 (FSS). Positions 41 and 63 each coordinate Mg(2+).

The protein belongs to the TRAFAC class TrmE-Era-EngA-EngB-Septin-like GTPase superfamily. EngB GTPase family. It depends on Mg(2+) as a cofactor.

Its function is as follows. Necessary for normal cell division and for the maintenance of normal septation. The polypeptide is Probable GTP-binding protein EngB (Aliivibrio fischeri (strain ATCC 700601 / ES114) (Vibrio fischeri)).